The following is a 476-amino-acid chain: Rifampicin monooxygenase (476 aa).

FAD contacts are provided by Thr-12, Glu-31, Lys-32, Gln-98, Leu-122, and Thr-156. Residues Arg-196 and Arg-213 each contribute to the rifampicin site. Positions 277, 290, and 291 each coordinate FAD.

This sequence belongs to the rifampicin monooxygenase family. FAD is required as a cofactor.

It carries out the reaction rifampicin + NADPH + O2 = rifampicin para-naphthoquinone carboxamide + NADP(+) + H2O + H(+). The catalysed reaction is rifampicin + NADH + O2 = rifampicin para-naphthoquinone carboxamide + NAD(+) + H2O + H(+). The enzyme catalyses rifamycin SV + NADPH + O2 = rifamycin SV para-naphthoquinone carboxamide + NADP(+) + H2O. It catalyses the reaction rifamycin SV + NADH + O2 = rifamycin SV para-naphthoquinone carboxamide + NAD(+) + H2O. In terms of biological role, monooxygenase that can modify rifampicin, thereby inactivating its antibiotic activity. Inactivates a broad range of rifamycin antibiotics. The protein is Rifampicin monooxygenase of Streptomyces venezuelae (strain ATCC 10712 / CBS 650.69 / DSM 40230 / JCM 4526 / NBRC 13096 / PD 04745).